The primary structure comprises 275 residues: Uridine-5'-phosphate dioxygenase (275 aa).

Positions 105, 107, and 247 each coordinate Fe cation.

Fe(2+) serves as cofactor.

It catalyses the reaction UMP + 2-oxoglutarate + O2 = uridine-5'-aldehyde + succinate + phosphate + CO2. The protein operates within antibiotic biosynthesis. Enhanced by ascorbic acid and inhibited by Zn(2+). Its function is as follows. Dioxygenase involved in the biosynthesis of the capuramycin-type nucleoside antibiotic A-102395. Catalyzes the dephosphorylation and oxidation of UMP to generate uridine-5'-aldehyde. Can also use the alternative alpha-keto acids pyruvate and alpha-ketoadipate (2-oxoadipate), with very low efficiency. Cannot use alpha-ketobutyrate, alpha-ketovalerate and oxaloacetate. In Amycolatopsis sp, this protein is Uridine-5'-phosphate dioxygenase.